We begin with the raw amino-acid sequence, 298 residues long: N-acetylmuramic acid 6-phosphate etherase (298 aa).

An SIS domain is found at 55–218 (IHTQVSGGGR…STGLMIKSGK (164 aa)). The active-site Proton donor is the Glu83. The active site involves Glu114.

It belongs to the GCKR-like family. MurNAc-6-P etherase subfamily. In terms of assembly, homodimer.

The catalysed reaction is N-acetyl-D-muramate 6-phosphate + H2O = N-acetyl-D-glucosamine 6-phosphate + (R)-lactate. It functions in the pathway amino-sugar metabolism; 1,6-anhydro-N-acetylmuramate degradation. It participates in amino-sugar metabolism; N-acetylmuramate degradation. The protein operates within cell wall biogenesis; peptidoglycan recycling. In terms of biological role, specifically catalyzes the cleavage of the D-lactyl ether substituent of MurNAc 6-phosphate, producing GlcNAc 6-phosphate and D-lactate. Together with AnmK, is also required for the utilization of anhydro-N-acetylmuramic acid (anhMurNAc) either imported from the medium or derived from its own cell wall murein, and thus plays a role in cell wall recycling. The chain is N-acetylmuramic acid 6-phosphate etherase from Escherichia coli O1:K1 / APEC.